The primary structure comprises 1019 residues: Enteropeptidase (1019 aa).

The N-myristoyl glycine moiety is linked to residue Gly2. Residues 2-18 lie on the Cytoplasmic side of the membrane; sequence GSKRGISSRHHSLSSYE. A helical; Signal-anchor for type II membrane protein transmembrane segment spans residues 19 to 47; sequence IMFAALFAILVVLCAGLIAVSCLTIKESQ. Topologically, residues 48–1019 are extracellular; sequence RGAALGQSHE…FTEWIQSFLH (972 aa). The SEA domain occupies 54 to 169; sequence QSHEARATFK…NSVDILDKLT (116 aa). 3 N-linked (GlcNAc...) asparagine glycosylation sites follow: Asn116, Asn147, and Asn179. The LDL-receptor class A 1 domain occupies 182-223; it reads IECLPGSSPCTDALTCIKADLFCDGEVNCPDGSDEDNKMCAT. 4 cysteine pairs are disulfide-bonded: Cys184–Cys197, Cys191–Cys210, Cys204–Cys221, and Cys225–Cys253. One can recognise a CUB 1 domain in the interval 225-334; that stretch reads CDGRFLLTGS…VGFNATYTAF (110 aa). Residues Asn328, Asn335, Asn388, Asn440, Asn470, Asn503, Asn534, and Asn630 are each glycosylated (N-linked (GlcNAc...) asparagine). The MAM domain occupies 342-504; it reads YEKINCNFED…ISLTYGICNG (163 aa). A disulfide bond links Cys524 and Cys552. The CUB 2 domain maps to 524–634; it reads CGGPFELWEP…GGFKANFTTG (111 aa). An LDL-receptor class A 2 domain is found at 641 to 679; sequence EPCKADHFQCKNGECVPLVNLCDGHLHCEDGSDEADCVR. 3 disulfide bridges follow: Cys643/Cys655, Cys650/Cys668, and Cys662/Cys677. Residues 678–771 form the SRCR domain; sequence VRFFNGTTNN…LIRLQCNHKS (94 aa). Asn682, Asn706, and Asn725 each carry an N-linked (GlcNAc...) asparagine glycan. 3 disulfides stabilise this stretch: Cys757–Cys767, Cys772–Cys896, and Cys810–Cys826. The region spanning 785 to 1019 is the Peptidase S1 domain; sequence IVGGSNAKEG…FTEWIQSFLH (235 aa). His825 acts as the Charge relay system in catalysis. Asn848 carries an N-linked (GlcNAc...) asparagine glycan. Asp876 functions as the Charge relay system in the catalytic mechanism. Residues Asn887, Asn909, and Asn949 are each glycosylated (N-linked (GlcNAc...) asparagine). 3 disulfide bridges follow: Cys910-Cys977, Cys941-Cys956, and Cys967-Cys995. The active-site Charge relay system is Ser971.

Belongs to the peptidase S1 family. In terms of assembly, heterodimer of a catalytic (light) chain and a multidomain (heavy) chain linked by a disulfide bond. In terms of processing, the chains are derived from a single precursor that is cleaved by a trypsin-like protease. In terms of tissue distribution, intestinal brush border.

Its subcellular location is the membrane. The enzyme catalyses Activation of trypsinogen by selective cleavage of 6-Lys-|-Ile-7 bond.. Responsible for initiating activation of pancreatic proteolytic proenzymes (trypsin, chymotrypsin and carboxypeptidase A). It catalyzes the conversion of trypsinogen to trypsin which in turn activates other proenzymes including chymotrypsinogen, procarboxypeptidases, and proelastases. In Homo sapiens (Human), this protein is Enteropeptidase (TMPRSS15).